Consider the following 256-residue polypeptide: 1-(5-phosphoribosyl)-5-[(5-phosphoribosylamino)methylideneamino] imidazole-4-carboxamide isomerase (256 aa).

Residue Asp-8 is the Proton acceptor of the active site. Asp-129 (proton donor) is an active-site residue.

Belongs to the HisA/HisF family.

The protein localises to the cytoplasm. It catalyses the reaction 1-(5-phospho-beta-D-ribosyl)-5-[(5-phospho-beta-D-ribosylamino)methylideneamino]imidazole-4-carboxamide = 5-[(5-phospho-1-deoxy-D-ribulos-1-ylimino)methylamino]-1-(5-phospho-beta-D-ribosyl)imidazole-4-carboxamide. The protein operates within amino-acid biosynthesis; L-histidine biosynthesis; L-histidine from 5-phospho-alpha-D-ribose 1-diphosphate: step 4/9. The polypeptide is 1-(5-phosphoribosyl)-5-[(5-phosphoribosylamino)methylideneamino] imidazole-4-carboxamide isomerase (Synechococcus sp. (strain WH7803)).